We begin with the raw amino-acid sequence, 72 residues long: Gas vesicle protein A (72 aa).

It belongs to the gas vesicle GvpA family. The gas vesicle shell is 2 nm thick and consists of a single layer of this protein. It forms helical ribs nearly perpendicular to the long axis of the vesicle.

The protein localises to the gas vesicle shell. In terms of biological role, gas vesicles are hollow, gas filled proteinaceous nanostructures found in some microorganisms. During planktonic growth they allow positioning of the organism at a favorable depth for light or nutrient acquisition. GvpA forms the protein shell. The chain is Gas vesicle protein A from Pseudanabaena galeata (strain PCC 6901).